A 427-amino-acid chain; its full sequence is Gamma-glutamyl phosphate reductase (427 aa).

The protein belongs to the gamma-glutamyl phosphate reductase family.

Its subcellular location is the cytoplasm. The enzyme catalyses L-glutamate 5-semialdehyde + phosphate + NADP(+) = L-glutamyl 5-phosphate + NADPH + H(+). Its pathway is amino-acid biosynthesis; L-proline biosynthesis; L-glutamate 5-semialdehyde from L-glutamate: step 2/2. Catalyzes the NADPH-dependent reduction of L-glutamate 5-phosphate into L-glutamate 5-semialdehyde and phosphate. The product spontaneously undergoes cyclization to form 1-pyrroline-5-carboxylate. In Rhizobium meliloti (strain 1021) (Ensifer meliloti), this protein is Gamma-glutamyl phosphate reductase.